The chain runs to 433 residues: GTPase Obg (433 aa).

An Obg domain is found at 1 to 159 (MKFVDSADLI…FEIRAELKVL (159 aa)). An OBG-type G domain is found at 160 to 332 (ADVGFVGLPN…LLFMIYEELK (173 aa)). Residues 166–173 (GLPNAGKS), 191–195 (FTTIN), 213–216 (DLPG), 284–287 (NKMD), and 313–315 (SGL) each bind GTP. Mg(2+) contacts are provided by serine 173 and threonine 193. The region spanning 355 to 433 (KFEEQKEDIQ…VFDYELEWTD (79 aa)) is the OCT domain.

The protein belongs to the TRAFAC class OBG-HflX-like GTPase superfamily. OBG GTPase family. As to quaternary structure, monomer. It depends on Mg(2+) as a cofactor.

Its subcellular location is the cytoplasm. In terms of biological role, an essential GTPase which binds GTP, GDP and possibly (p)ppGpp with moderate affinity, with high nucleotide exchange rates and a fairly low GTP hydrolysis rate. Plays a role in control of the cell cycle, stress response, ribosome biogenesis and in those bacteria that undergo differentiation, in morphogenesis control. This is GTPase Obg from Mycoplasma capricolum subsp. capricolum (strain California kid / ATCC 27343 / NCTC 10154).